Consider the following 644-residue polypeptide: DNA mismatch repair protein MutL (644 aa).

Positions 340–360 are enriched in basic and acidic residues; sequence KKEKDESVQEQFKFEHTKPRE. The segment at 340–425 is disordered; it reads KKEKDESVQE…ETVREEKEWT (86 aa). Low complexity predominate over residues 387–400; sequence QLWQPPKQEWQPPQ. Residues 416 to 425 show a composition bias toward basic and acidic residues; it reads ETVREEKEWT.

The protein belongs to the DNA mismatch repair MutL/HexB family.

In terms of biological role, this protein is involved in the repair of mismatches in DNA. It is required for dam-dependent methyl-directed DNA mismatch repair. May act as a 'molecular matchmaker', a protein that promotes the formation of a stable complex between two or more DNA-binding proteins in an ATP-dependent manner without itself being part of a final effector complex. The sequence is that of DNA mismatch repair protein MutL from Bacillus mycoides (strain KBAB4) (Bacillus weihenstephanensis).